The primary structure comprises 296 residues: 33 kDa chaperonin (296 aa).

Intrachain disulfides connect Cys-236–Cys-238 and Cys-269–Cys-272.

It belongs to the HSP33 family. In terms of processing, under oxidizing conditions two disulfide bonds are formed involving the reactive cysteines. Under reducing conditions zinc is bound to the reactive cysteines and the protein is inactive.

The protein localises to the cytoplasm. In terms of biological role, redox regulated molecular chaperone. Protects both thermally unfolding and oxidatively damaged proteins from irreversible aggregation. Plays an important role in the bacterial defense system toward oxidative stress. The polypeptide is 33 kDa chaperonin (Lactobacillus helveticus (strain DPC 4571)).